The chain runs to 232 residues: 5'-methylthioadenosine/S-adenosylhomocysteine nucleosidase (232 aa).

The active-site Proton acceptor is Glu14. Substrate is bound by residues Gly80, Val154, and 175 to 176; that span reads ME. Asp199 acts as the Proton donor in catalysis.

This sequence belongs to the PNP/UDP phosphorylase family. MtnN subfamily.

It carries out the reaction S-adenosyl-L-homocysteine + H2O = S-(5-deoxy-D-ribos-5-yl)-L-homocysteine + adenine. It catalyses the reaction S-methyl-5'-thioadenosine + H2O = 5-(methylsulfanyl)-D-ribose + adenine. The catalysed reaction is 5'-deoxyadenosine + H2O = 5-deoxy-D-ribose + adenine. The protein operates within amino-acid biosynthesis; L-methionine biosynthesis via salvage pathway; S-methyl-5-thio-alpha-D-ribose 1-phosphate from S-methyl-5'-thioadenosine (hydrolase route): step 1/2. In terms of biological role, catalyzes the irreversible cleavage of the glycosidic bond in both 5'-methylthioadenosine (MTA) and S-adenosylhomocysteine (SAH/AdoHcy) to adenine and the corresponding thioribose, 5'-methylthioribose and S-ribosylhomocysteine, respectively. Also cleaves 5'-deoxyadenosine, a toxic by-product of radical S-adenosylmethionine (SAM) enzymes, into 5-deoxyribose and adenine. The protein is 5'-methylthioadenosine/S-adenosylhomocysteine nucleosidase of Haemophilus ducreyi (strain 35000HP / ATCC 700724).